The chain runs to 120 residues: Glycine cleavage system H protein (120 aa).

Positions 17 to 99 constitute a Lipoyl-binding domain; the sequence is VATVGITAHA…MGAGWFFKLK (83 aa). The residue at position 58 (Lys-58) is an N6-lipoyllysine.

Belongs to the GcvH family. As to quaternary structure, the glycine cleavage system is composed of four proteins: P, T, L and H. It depends on (R)-lipoate as a cofactor.

Its function is as follows. The glycine cleavage system catalyzes the degradation of glycine. The H protein shuttles the methylamine group of glycine from the P protein to the T protein. This chain is Glycine cleavage system H protein, found in Rhizobium rhizogenes (strain K84 / ATCC BAA-868) (Agrobacterium radiobacter).